The chain runs to 63 residues: Large ribosomal subunit protein uL29 (63 aa).

Belongs to the universal ribosomal protein uL29 family.

This is Large ribosomal subunit protein uL29 from Escherichia coli O8 (strain IAI1).